We begin with the raw amino-acid sequence, 432 residues long: N-acylneuraminate cytidylyltransferase (432 aa).

6 residues coordinate substrate: Arg-39, Asn-49, Arg-98, Ser-107, Ser-109, and Gln-130. Arg-188 is an active-site residue.

This sequence belongs to the CMP-NeuNAc synthase family. Homotetramer; the active enzyme is formed by a dimer of dimers. In terms of tissue distribution, expressed in testis, ovary and liver.

It localises to the nucleus. It carries out the reaction an N-acylneuraminate + CTP = a CMP-N-acyl-beta-neuraminate + diphosphate. Its pathway is amino-sugar metabolism; N-acetylneuraminate metabolism. Functionally, catalyzes the activation of N-acetylneuraminic acid (NeuNAc) to cytidine 5'-monophosphate N-acetylneuraminic acid (CMP-NeuNAc), a substrate required for the addition of sialic acid. This is N-acylneuraminate cytidylyltransferase (cmas) from Oncorhynchus mykiss (Rainbow trout).